A 522-amino-acid chain; its full sequence is Leucine-rich repeat transmembrane neuronal protein 1 (522 aa).

The signal sequence occupies residues 1–34 (MDFLLLGLCLHWLLRRPSGVVLCLLGACFQMLPA). One can recognise an LRRNT domain in the interval 35–63 (APSGCPGQCRCEGRLLYCEALNLTEAPHN). Residues 35-427 (APSGCPGQCR…HAENAVQIHK (393 aa)) lie on the Extracellular side of the membrane. 2 N-linked (GlcNAc...) asparagine glycosylation sites follow: Asn-56 and Asn-63. LRR repeat units follow at residues 64–87 (LSGL…QFTG), 89–111 (MQLT…AFQK), 112–135 (LRRV…TFRP), 136–159 (MPNL…LFHG), 161–183 (RKLT…IFQD), 184–207 (CRSL…SFAG), 209–231 (FKLT…HFPR), 233–255 (ISLH…LDWV), 256–278 (WNLE…VFET), and 280–302 (PYLQ…ILNS). An N-linked (GlcNAc...) asparagine glycan is attached at Asn-130. One can recognise an LRRCT domain in the interval 314–365 (NLWDCGRNVCALASWLSNFQGRYDANLQCASPEYAQGEDVLDAVYAFHLCED). An N-linked (GlcNAc...) asparagine glycan is attached at Asn-381. The chain crosses the membrane as a helical span at residues 428-448 (VVTGTMALIFSFLIVVLVLYV). At 449–522 (SWKCFPASLR…HQQPARECEV (74 aa)) the chain is on the cytoplasmic side.

Belongs to the LRRTM family. As to expression, expressed predominantly in the nervous system by postmitotic neurons, but also in some non-neuronal tissues. In adult brain expression is most prominent in the forebraain, particularly in the thalamus and in the cortical areas including hippocampus, piriform and posterior cingulate.

The protein localises to the cell membrane. It localises to the postsynaptic cell membrane. Exhibits strong synaptogenic activity, restricted to excitatory presynaptic differentiation, acting at both pre- and postsynaptic level. The polypeptide is Leucine-rich repeat transmembrane neuronal protein 1 (Lrrtm1) (Mus musculus (Mouse)).